The chain runs to 420 residues: Putative competence-damage inducible protein (420 aa).

It belongs to the CinA family.

The sequence is that of Putative competence-damage inducible protein from Lactiplantibacillus plantarum (strain ATCC BAA-793 / NCIMB 8826 / WCFS1) (Lactobacillus plantarum).